Reading from the N-terminus, the 311-residue chain is Acetyl-coenzyme A carboxylase carboxyl transferase subunit alpha (311 aa).

The 251-residue stretch at 36–286 (NLEKEVAKVY…ASYFVSKLEK (251 aa)) folds into the CoA carboxyltransferase C-terminal domain.

The protein belongs to the AccA family. Acetyl-CoA carboxylase is a heterohexamer composed of biotin carboxyl carrier protein (AccB), biotin carboxylase (AccC) and two subunits each of ACCase subunit alpha (AccA) and ACCase subunit beta (AccD).

It localises to the cytoplasm. It carries out the reaction N(6)-carboxybiotinyl-L-lysyl-[protein] + acetyl-CoA = N(6)-biotinyl-L-lysyl-[protein] + malonyl-CoA. It functions in the pathway lipid metabolism; malonyl-CoA biosynthesis; malonyl-CoA from acetyl-CoA: step 1/1. Functionally, component of the acetyl coenzyme A carboxylase (ACC) complex. First, biotin carboxylase catalyzes the carboxylation of biotin on its carrier protein (BCCP) and then the CO(2) group is transferred by the carboxyltransferase to acetyl-CoA to form malonyl-CoA. In Campylobacter curvus (strain 525.92), this protein is Acetyl-coenzyme A carboxylase carboxyl transferase subunit alpha.